The sequence spans 241 residues: Uracil-DNA glycosylase (241 aa).

Asp-71 (proton acceptor) is an active-site residue.

This sequence belongs to the uracil-DNA glycosylase (UDG) superfamily. UNG family.

Its subcellular location is the cytoplasm. The catalysed reaction is Hydrolyzes single-stranded DNA or mismatched double-stranded DNA and polynucleotides, releasing free uracil.. Functionally, excises uracil residues from the DNA which can arise as a result of misincorporation of dUMP residues by DNA polymerase or due to deamination of cytosine. In Xanthomonas euvesicatoria pv. vesicatoria (strain 85-10) (Xanthomonas campestris pv. vesicatoria), this protein is Uracil-DNA glycosylase.